The sequence spans 184 residues: GTP cyclohydrolase 1 (184 aa).

Positions 75, 78, and 146 each coordinate Zn(2+).

This sequence belongs to the GTP cyclohydrolase I family. As to quaternary structure, toroid-shaped homodecamer, composed of two pentamers of five dimers.

It catalyses the reaction GTP + H2O = 7,8-dihydroneopterin 3'-triphosphate + formate + H(+). It functions in the pathway cofactor biosynthesis; 7,8-dihydroneopterin triphosphate biosynthesis; 7,8-dihydroneopterin triphosphate from GTP: step 1/1. The protein is GTP cyclohydrolase 1 of Streptococcus pneumoniae serotype 2 (strain D39 / NCTC 7466).